Consider the following 691-residue polypeptide: Elongation factor G (691 aa).

In terms of domain architecture, tr-type G spans 8 to 283 (EDYRNFGIMA…AVVDYLPSPA (276 aa)). GTP-binding positions include 17–24 (AHIDAGKT), 81–85 (DTPGH), and 135–138 (NKMD).

Belongs to the TRAFAC class translation factor GTPase superfamily. Classic translation factor GTPase family. EF-G/EF-2 subfamily.

The protein resides in the cytoplasm. Its function is as follows. Catalyzes the GTP-dependent ribosomal translocation step during translation elongation. During this step, the ribosome changes from the pre-translocational (PRE) to the post-translocational (POST) state as the newly formed A-site-bound peptidyl-tRNA and P-site-bound deacylated tRNA move to the P and E sites, respectively. Catalyzes the coordinated movement of the two tRNA molecules, the mRNA and conformational changes in the ribosome. This chain is Elongation factor G, found in Methylobacterium sp. (strain 4-46).